Here is a 559-residue protein sequence, read N- to C-terminus: Kelch repeat and BTB domain-containing protein 2 (559 aa).

A BTB domain is found at C26 to N95. The BACK domain occupies C128–K223. Kelch repeat units lie at residues E305–D352, M353–Q399, and I401–D463.

In terms of assembly, interacts (via BTB domain) with host CUL3.

It is found in the host cytoplasm. In terms of biological role, probable substrate-specific adapter of CUL3-containing E3 ubiquitin-protein ligases which mediate the ubiquitination and subsequent proteasomal degradation of host target proteins. This chain is Kelch repeat and BTB domain-containing protein 2 (KBTB2), found in Mus musculus (Mouse).